The following is a 691-amino-acid chain: Pentatricopeptide repeat-containing protein At5g27110 (691 aa).

PPR repeat units follow at residues 38–68 (DVVL…FDIR), 70–104 (DVYI…SICV), 106–140 (DSFT…GYVC), 141–171 (DVVV…MPER), 172–206 (DVAS…GFEP), 207–241 (NSVS…GFEL), 242–272 (DEYV…MPRK), 273–307 (SLVA…GTRP), 308–342 (SQTT…VVNA), 343–373 (DIYV…TQKD), 374–408 (VAES…GVKP), 409–443 (DVVT…RLET), 444–474 (DELL…IPKK), 475–509 (DVVS…GLKP), 510–540 (DGVT…MRSK), and 546–576 (IIEH…TPET). The interval 582-657 (LLSTLFSACC…KPGCSWIEMS (76 aa)) is type E motif. A type E(+) motif region spans residues 658 to 688 (DKVCHFFAEDRSHLRAENVYECLALLSGHME).

The protein belongs to the PPR family. PCMP-E subfamily.

The polypeptide is Pentatricopeptide repeat-containing protein At5g27110 (PCMP-E14) (Arabidopsis thaliana (Mouse-ear cress)).